The chain runs to 114 residues: Vesicle-associated membrane protein 2 (114 aa).

A compositionally biased stretch (pro residues) spans 1-11 (MSAPAAGPPAA). The tract at residues 1-31 (MSAPAAGPPAAAPGDGAPQGPPNLTSNRRLQ) is disordered. Ser2 bears the N-acetylserine mark. The Cytoplasmic portion of the chain corresponds to 2-92 (SAPAAGPPAA…KRKYWWKNMK (91 aa)). In terms of domain architecture, v-SNARE coiled-coil homology spans 29–89 (RLQQTQAQVD…AKLKRKYWWK (61 aa)). The helical; Anchor for type IV membrane protein transmembrane segment at 93–111 (MMIIMGVICAIILIIIIVY) threads the bilayer. Over 112–114 (FST) the chain is Vesicular.

It belongs to the synaptobrevin family.

The protein localises to the cytoplasmic vesicle. It is found in the secretory vesicle. The protein resides in the synaptic vesicle membrane. Its subcellular location is the cell membrane. Functionally, involved in the targeting and/or fusion of transport vesicles to their target membrane. Major SNARE protein of synaptic vesicles which mediates fusion of synaptic vesicles to release neurotransmitters. Essential for fast vesicular exocytosis and activity-dependent neurotransmitter release as well as fast endocytosis that mediates rapid reuse of synaptic vesicles. The protein is Vesicle-associated membrane protein 2 (vamp2) of Xenopus laevis (African clawed frog).